Reading from the N-terminus, the 292-residue chain is Small ribosomal subunit biogenesis GTPase RsgA (292 aa).

The CP-type G domain occupies 64 to 221; it reads RSELFRPAVA…LVDTPGFSSL (158 aa). GTP is bound by residues 113 to 116 and 164 to 172; these read NKMD and GPSGVGKST. Zn(2+) is bound by residues cysteine 245, cysteine 250, histidine 252, and cysteine 258.

It belongs to the TRAFAC class YlqF/YawG GTPase family. RsgA subfamily. Monomer. Associates with 30S ribosomal subunit, binds 16S rRNA. Requires Zn(2+) as cofactor.

It localises to the cytoplasm. In terms of biological role, one of several proteins that assist in the late maturation steps of the functional core of the 30S ribosomal subunit. Helps release RbfA from mature subunits. May play a role in the assembly of ribosomal proteins into the subunit. Circularly permuted GTPase that catalyzes slow GTP hydrolysis, GTPase activity is stimulated by the 30S ribosomal subunit. The chain is Small ribosomal subunit biogenesis GTPase RsgA from Clostridium botulinum (strain Okra / Type B1).